The sequence spans 724 residues: Solute carrier organic anion transporter family member 4C1 (724 aa).

The Cytoplasmic portion of the chain corresponds to 1–105 (MKSAKGIENL…QCLQRCNTPG (105 aa)). A phosphoserine mark is found at S15, S16, S24, S26, and S28. Residues 24-71 (SASPSQVEVSALSSDPQRENSQPQELQKPQEPQKSPEPSLPSAPPNVS) are disordered. The segment covering 25–38 (ASPSQVEVSALSSD) has biased composition (polar residues). Residues 44–60 (SQPQELQKPQEPQKSPE) show a composition bias toward low complexity. A helical transmembrane segment spans residues 106–126 (GFLLHYCLLAVTQGIVVNGLV). At 127-145 (NISISTIEKRYEMKSSLTG) the chain is on the extracellular side. A helical transmembrane segment spans residues 146–166 (LISSSYDISFCLLSLFVSFFG). At 167–172 (ERGHKP) the chain is on the cytoplasmic side. The chain crosses the membrane as a helical span at residues 173–197 (RWLAFAAFMIGLGALVFSLPQFFSG). The Extracellular segment spans residues 198–224 (EYKLGSLFEDTCVTTRNSTSCTSSTSS). Residues 225–254 (LSNYLYVFILGQLLLGAGGTPLYTLGTAFL) form a helical membrane-spanning segment. Topologically, residues 255–274 (DDSVPTHKSSLYIGTGYAMS) are cytoplasmic. Residues 275–295 (ILGPAIGYVLGGQLLTIYVDV) traverse the membrane as a helical segment. Topologically, residues 296-311 (AMGESTDITEDDPRWL) are extracellular. Residues 312–336 (GAWWIGFLLSWIFAWSLIIPFSCFP) traverse the membrane as a helical segment. Over 337–377 (KHLPGTAEIQAGKTSQAHQSNSNADAKFGKSIKDFPAALKN) the chain is Cytoplasmic. Residues 378–399 (LMKNAVFMCLVLSTSSEALITT) traverse the membrane as a helical segment. Residues 400–419 (GFATFLPKFIENQFGLTSSF) lie on the Extracellular side of the membrane. Residues 420-443 (AATLGGAVLIPGAALGQILGGFLV) traverse the membrane as a helical segment. The Cytoplasmic segment spans residues 444–447 (SKFK). The helical transmembrane segment at 448-471 (MTCKNTMKFALFTSGVALTLSFVF) threads the bilayer. The Extracellular portion of the chain corresponds to 472-580 (IYAKCGNEPF…ETHCAKLPIF (109 aa)). One can recognise a Kazal-like domain in the interval 495 to 549 (GNLIAPCNANCNCLRSYYYPVCGDGVQYFSPCFAGCSNSVAHRKPKVYYNCSCIE). Cystine bridges form between C501-C530, C507-C526, and C516-C547. Residues 581–603 (LCIFFIVIIFTFMAGTPITVSIL) form a helical membrane-spanning segment. The Cytoplasmic portion of the chain corresponds to 604-612 (RCVNHRQRS). The helical transmembrane segment at 613-638 (LALGIQFMVLRLLGTIPGPIIFGFTI) threads the bilayer. Over 639-672 (DSTCILWDINDCGIKGACRIYDNIKMAHMLVAIS) the chain is Extracellular. A helical membrane pass occupies residues 673-690 (VTCKVITMFFNGFAIFLY). Residues 691–724 (KPPPSATDLSFHKENAVVTNVLAEQDLNKIVKEG) are Cytoplasmic-facing.

This sequence belongs to the organo anion transporter (TC 2.A.60) family.

Its subcellular location is the basolateral cell membrane. The enzyme catalyses estrone 3-sulfate(out) = estrone 3-sulfate(in). The catalysed reaction is L-thyroxine(out) = L-thyroxine(in). It carries out the reaction 3,3',5-triiodo-L-thyronine(out) = 3,3',5-triiodo-L-thyronine(in). It catalyses the reaction chenodeoxycholate(out) = chenodeoxycholate(in). The enzyme catalyses glycocholate(out) = glycocholate(in). The catalysed reaction is L-homoarginine(in) = L-homoarginine(out). It carries out the reaction L-arginine(in) = L-arginine(out). It catalyses the reaction N(omega),N(omega)-dimethyl-L-arginine(out) = N(omega),N(omega)-dimethyl-L-arginine(in). Functionally, mediates the transport of organic anions such as steroids (estrone 3-sulfate, chenodeoxycholate, glycocholate) and thyroid hormones (3,3',5-triiodo-L-thyronine (T3), L-thyroxine (T4)), in the kidney. Capable of transporting cAMP and pharmacological substances such as digoxin, ouabain and methotrexate. Transport is independent of sodium, chloride ion, and ATP. Transport activity is stimulated by an acidic extracellular environment due to increased substrate affinity to the transporter. The driving force for this transport activity is currently not known. The role of hydrogencarbonate (HCO3(-), bicarbonate) as the probable counteranion that exchanges for organic anions is still not well defined. Functions as an uptake transporter at the apical membrane, suggesting a role in renal reabsorption. Involved in the renal secretion of the uremic toxin ADMA (N(omega),N(omega)-dimethyl-L-arginine or asymmetrical dimethylarginine), which is associated to cardiovascular events and mortality, and the structurally related amino acids L-arginine and L-homoarginine (a cardioprotective biomarker). Can act bidirectionally, suggesting a dual protective role of this transport protein; exporting L-homoarginine after being synthesized in proximal tubule cells, and mediating uptake of ADMA from the blood into proximal tubule cells where it is degraded by the enzyme dimethylarginine dimethylaminohydrolase 1 (DDAH1). May be involved in sperm maturation by enabling directed movement of organic anions and compounds within or between cells. This ion-transporting process is important to maintain the strict epididymal homeostasis necessary for sperm maturation. May have a role in secretory functions since seminal vesicle epithelial cells are assumed to secrete proteins involved in decapacitation by modifying surface proteins to facilitate the acquisition of the ability to fertilize the egg. The chain is Solute carrier organic anion transporter family member 4C1 from Pongo abelii (Sumatran orangutan).